The following is a 1541-amino-acid chain: Multiple epidermal growth factor-like domains protein 6 (1541 aa).

A signal peptide spans 1–30 (MSFLEEARAAGRAVVLALVLLLLPAVPVGA). Residues 44-125 (MPHVCAEQEL…QQPDEEGCLS (82 aa)) form the EMI domain. Disulfide bonds link Cys-48/Cys-111, Cys-77/Cys-83, Cys-110/Cys-123, Cys-128/Cys-139, Cys-133/Cys-147, Cys-149/Cys-158, Cys-165/Cys-176, Cys-172/Cys-185, Cys-187/Cys-200, Cys-242/Cys-255, Cys-248/Cys-268, Cys-270/Cys-283, Cys-289/Cys-300, Cys-296/Cys-309, and Cys-311/Cys-324. An EGF-like 1 domain is found at 124-159 (LSAECSASLCFHGGRCVPGSAQPCHCPPGFQGPRCQ). The EGF-like 2; calcium-binding domain occupies 161–201 (DVDECRTHNGGCQHRCVNTPGSYLCECKPGFRLHTDSRTCL). EGF-like domains follow at residues 206–242 (CALGNGGCQHHCVQLTITRHRCQCRPGFQLQEDGRHC) and 238–284 (DGRH…KACE). Asn-252 carries an N-linked (GlcNAc...) asparagine glycan. In terms of domain architecture, EGF-like 5; calcium-binding spans 285–325 (DVDECAAGLAQCAHGCLNTQGSFKCVCHAGYELGADGRQCY). 2 consecutive EGF-like domains span residues 335–370 (CEANNGGCSHGCSHTSAGPLCTCPRGYELDTDQRTC) and 375–411 (DCADSPCCQQVCTNNPGGYECGCYAGYRLSADGCGCE). The EGF-like 8; calcium-binding domain maps to 412–452 (DVDECASSRGGCEHHCTNLAGSFQCSCEAGYRLHEDRRGCS). Intrachain disulfides connect Cys-416/Cys-427, Cys-423/Cys-436, Cys-438/Cys-451, Cys-520/Cys-533, Cys-527/Cys-540, Cys-542/Cys-551, Cys-564/Cys-576, Cys-570/Cys-583, Cys-585/Cys-594, Cys-607/Cys-619, Cys-613/Cys-626, and Cys-628/Cys-637. 19 EGF-like domains span residues 516–552 (FGHDCSLTCDDCRNGGTCLLGLDGCDCPEGWTGLICN), 560–595 (FGKNCSFSCSCQNGGTCDSVTGACRCPPGVSGTNCE), 603–638 (YGKHCRKKCNCANRGRCHRLYGACLCDPGLYGRFCH), 736–770 (FGVNCSSSCSCGGAPCHGVTGQCRCPPGRTGEDCE), 783–814 (QEICPACQHAARCDPETGACLCLPGFVGSRCQ), 822–857 (YGPSCQTRCSCANDGHCHPATGHCSCAPGWTGFSCQ), 865–901 (WGPDCSHPCNCSAGHGSCDAISGLCLCEAGYVGPRCE), 909–944 (FGPGCEQRCQCQHGAACDHVSGACTCPAGWRGTFCE), 955–987 (DCRSACNCTAGAACDAVNGSCLCPAGRRGPRCA), 995–1030 (YGHNCSQACACFNGASCDPVHGQCHCAPGWMGPSCL), 1038–1073 (YGDNCRHSCLCQNGGTCDPVSGHCACPEGWAGLACE), 1081–1116 (VRAGCRHSGGCLNGGLCDPHTGRCLCPAGWTGDKCQ), 1124–1159 (FGEACAQRCSCPPGAACHHVTGACRCPPGFTGSGCE), 1211–1246 (YGPGCEQLCGCLNGGSCDAATGACRCPTGFLGTDCN), 1254–1289 (FGPNCTHVCGCGQGAACDPVTGTCLCPPGRAGVRCE), 1297–1332 (FGVGCEHTCSCRNGGLCHASNGSCSCGLGWTGRHCE), 1345–1375 (HLECSCHNNSTCEPATGTCRCGPGFYGQACE), 1383–1418 (HGAGCQGLCWCQHGAPCDPISGRCLCPAGFHGHFCE), and 1469–1504 (FGPSCTLHCDCGGGADCDPVSGQCHCVDGYMGPTCR). The N-linked (GlcNAc...) asparagine glycan is linked to Asn-739. 15 disulfide bridges follow: Cys-740–Cys-751, Cys-744–Cys-758, Cys-760–Cys-769, Cys-786–Cys-795, Cys-789–Cys-802, Cys-804–Cys-813, Cys-826–Cys-838, Cys-832–Cys-845, Cys-847–Cys-856, Cys-869–Cys-882, Cys-873–Cys-889, Cys-891–Cys-900, Cys-913–Cys-925, Cys-919–Cys-932, and Cys-934–Cys-943. Disulfide bonds link Cys-999/Cys-1011, Cys-1005/Cys-1018, Cys-1020/Cys-1029, Cys-1042/Cys-1054, Cys-1048/Cys-1061, Cys-1063/Cys-1072, Cys-1085/Cys-1097, Cys-1091/Cys-1104, Cys-1106/Cys-1115, Cys-1128/Cys-1140, Cys-1134/Cys-1147, Cys-1149/Cys-1158, Cys-1215/Cys-1227, Cys-1221/Cys-1234, Cys-1236/Cys-1245, Cys-1258/Cys-1270, Cys-1264/Cys-1277, Cys-1279/Cys-1288, Cys-1301/Cys-1313, Cys-1307/Cys-1320, Cys-1322/Cys-1331, Cys-1348/Cys-1356, Cys-1350/Cys-1363, Cys-1365/Cys-1374, Cys-1387/Cys-1399, Cys-1393/Cys-1406, Cys-1408/Cys-1417, Cys-1473/Cys-1485, Cys-1479/Cys-1492, and Cys-1494/Cys-1503. A disordered region spans residues 1509-1541 (LRLPENPSLAQGSAGTLPASSRPTSRSGGPARH). Positions 1516-1535 (SLAQGSAGTLPASSRPTSRS) are enriched in polar residues.

Its subcellular location is the secreted. In Homo sapiens (Human), this protein is Multiple epidermal growth factor-like domains protein 6 (MEGF6).